A 162-amino-acid chain; its full sequence is ATP synthase subunit b (162 aa).

A helical membrane pass occupies residues Leu2 to Leu22.

It belongs to the ATPase B chain family. As to quaternary structure, F-type ATPases have 2 components, F(1) - the catalytic core - and F(0) - the membrane proton channel. F(1) has five subunits: alpha(3), beta(3), gamma(1), delta(1), epsilon(1). F(0) has three main subunits: a(1), b(2) and c(10-14). The alpha and beta chains form an alternating ring which encloses part of the gamma chain. F(1) is attached to F(0) by a central stalk formed by the gamma and epsilon chains, while a peripheral stalk is formed by the delta and b chains.

Its subcellular location is the cell membrane. F(1)F(0) ATP synthase produces ATP from ADP in the presence of a proton or sodium gradient. F-type ATPases consist of two structural domains, F(1) containing the extramembraneous catalytic core and F(0) containing the membrane proton channel, linked together by a central stalk and a peripheral stalk. During catalysis, ATP synthesis in the catalytic domain of F(1) is coupled via a rotary mechanism of the central stalk subunits to proton translocation. Functionally, component of the F(0) channel, it forms part of the peripheral stalk, linking F(1) to F(0). The sequence is that of ATP synthase subunit b from Pelotomaculum thermopropionicum (strain DSM 13744 / JCM 10971 / SI).